The sequence spans 318 residues: Transaldolase (318 aa).

Lys132 functions as the Schiff-base intermediate with substrate in the catalytic mechanism.

This sequence belongs to the transaldolase family. Type 1 subfamily. Homodimer.

The protein resides in the cytoplasm. It carries out the reaction D-sedoheptulose 7-phosphate + D-glyceraldehyde 3-phosphate = D-erythrose 4-phosphate + beta-D-fructose 6-phosphate. It functions in the pathway carbohydrate degradation; pentose phosphate pathway; D-glyceraldehyde 3-phosphate and beta-D-fructose 6-phosphate from D-ribose 5-phosphate and D-xylulose 5-phosphate (non-oxidative stage): step 2/3. In terms of biological role, transaldolase is important for the balance of metabolites in the pentose-phosphate pathway. The polypeptide is Transaldolase (Shewanella woodyi (strain ATCC 51908 / MS32)).